Reading from the N-terminus, the 505-residue chain is Oxidative stress-induced growth inhibitor 2 (505 aa).

Belongs to the OKL38 family. NADPH is required as a cofactor. As to expression, ubiquitous. Expressed at higher levels in testis and ovary.

It is found in the midbody. In terms of biological role, monooxygenase catalytic activity. May be involved in meiosis or the maturation of germ cells. This chain is Oxidative stress-induced growth inhibitor 2, found in Homo sapiens (Human).